The following is a 458-amino-acid chain: Argininosuccinate lyase (458 aa).

It belongs to the lyase 1 family. Argininosuccinate lyase subfamily.

It localises to the cytoplasm. It catalyses the reaction 2-(N(omega)-L-arginino)succinate = fumarate + L-arginine. It functions in the pathway amino-acid biosynthesis; L-arginine biosynthesis; L-arginine from L-ornithine and carbamoyl phosphate: step 3/3. This Neisseria meningitidis serogroup C (strain 053442) protein is Argininosuccinate lyase.